The following is a 265-amino-acid chain: Orotidine 5'-phosphate decarboxylase (265 aa).

Substrate is bound by residues Asp37, Lys59 to His61, Asp91 to Thr100, Tyr217, and Arg235. The Proton donor role is filled by Lys93.

This sequence belongs to the OMP decarboxylase family.

The enzyme catalyses orotidine 5'-phosphate + H(+) = UMP + CO2. Its pathway is pyrimidine metabolism; UMP biosynthesis via de novo pathway; UMP from orotate: step 2/2. The sequence is that of Orotidine 5'-phosphate decarboxylase (URA3) from Candida glabrata (strain ATCC 2001 / BCRC 20586 / JCM 3761 / NBRC 0622 / NRRL Y-65 / CBS 138) (Yeast).